A 93-amino-acid polypeptide reads, in one-letter code: Parbolysin P3 (93 aa).

Cystine bridges form between C16/C37, C22/C33, and C47/C60.

Belongs to the worm cytolysin family. Localized within the skin and proboscis and are most readily isolated from body mucus secretions.

The protein resides in the secreted. Functionally, cytolysin that shows hemolytic activity (on bovine erythrocytes, HC(50)=5.75 mg/ml). This hemolytic activity is completely inhibited by small unilamelar vesicles composed of PC/PG, PC/PI and PC/PS in 1:1 molar ratios (with at least 100 mg/ml concentration). This chain is Parbolysin P3, found in Parborlasia corrugatus (Antarctic nemertean worm).